Reading from the N-terminus, the 641-residue chain is Chaperone protein DnaK (641 aa).

At Thr-199 the chain carries Phosphothreonine; by autocatalysis. Residues 603-613 (YTQQGGTAGSE) are compositionally biased toward polar residues. The disordered stretch occupies residues 603 to 641 (YTQQGGTAGSETHSHEKAGGSGGDDVVDAEFEEVRDDKR). Residues 627–641 (DVVDAEFEEVRDDKR) show a composition bias toward acidic residues.

It belongs to the heat shock protein 70 family.

Functionally, acts as a chaperone. In Methylococcus capsulatus (strain ATCC 33009 / NCIMB 11132 / Bath), this protein is Chaperone protein DnaK.